A 517-amino-acid chain; its full sequence is Putative thymidine phosphorylase (517 aa).

Belongs to the thymidine/pyrimidine-nucleoside phosphorylase family. Type 2 subfamily.

The enzyme catalyses thymidine + phosphate = 2-deoxy-alpha-D-ribose 1-phosphate + thymine. The protein is Putative thymidine phosphorylase of Legionella pneumophila (strain Corby).